A 111-amino-acid chain; its full sequence is Prothymosin alpha (111 aa).

M1 is subject to N-acetylmethionine. The segment at 1 to 111 (MSDAAVDTSS…TKKQKTEEDD (111 aa)) is disordered. Residue S2 is modified to N-acetylserine; in Prothymosin alpha, N-terminally processed. Position 2 is a phosphoserine (S2). Residue T8 is modified to Phosphothreonine. Phosphoserine occurs at positions 9 and 10. Phosphothreonine is present on residues T13 and T14. Over residues 13 to 31 (TTKDLKEKKEVVEEAENGR) the composition is skewed to basic and acidic residues. N6-acetyllysine; alternate is present on K15. K15 is subject to N6-succinyllysine; alternate. Residues 43 to 84 (ENGEQEADNEVDEEEEEGGEEEEEEEEGDGEEEDGDEDEEAE) show a composition bias toward acidic residues. Residues 101-111 (DTKKQKTEEDD) are compositionally biased toward basic and acidic residues. T102 carries the phosphothreonine modification. K103 carries the N6-acetyllysine; alternate modification. A Glycyl lysine isopeptide (Lys-Gly) (interchain with G-Cter in SUMO2); alternate cross-link involves residue K103. A Phosphothreonine modification is found at T107.

It belongs to the pro/parathymosin family. In terms of assembly, interacts with NUPR1; regulates apoptotic process. In terms of processing, covalently linked to a small RNA of about 20 nucleotides.

It is found in the nucleus. In terms of biological role, prothymosin alpha may mediate immune function by conferring resistance to certain opportunistic infections. The chain is Prothymosin alpha (Ptma) from Mus musculus (Mouse).